We begin with the raw amino-acid sequence, 436 residues long: Prenyltransferase nscD (436 aa).

Belongs to the tryptophan dimethylallyltransferase family.

Its pathway is secondary metabolite biosynthesis. Functionally, prenyltransferase; part of the gene cluster that mediates the biosynthesis of neosartoricin B, a prenylated anthracenone that probably exhibits T-cell antiproliferative activity, suggestive of a physiological role as an immunosuppressive agent. The non-reducing polyketide synthase nscA probably synthesizes and cyclizes the decaketide backbone. The hydrolase nscB then mediates the product release through hydrolysis followed by spontaneous decarboxylation. The prenyltransferase nscD catalyzes the addition of the dimethylallyl group to the aromatic C5. The FAD-dependent monooxygenase nscC is then responsible for the stereospecific hydroxylation at C2. Neosartoricin B can be converted into two additional compounds neosartoricins C and D. Neosartoricin C is a spirocyclic compound that is cyclized through the attack of C3 hydroxyl on C14, followed by dehydration. On the other hand, neosartoricin D is a further cyclized compound in which attack of C2 on C14 in neosartoricin C results in the formation of the acetal-containing dioxabicyclo-octanone ring. Both of these compounds are novel and possibly represent related metabolites of the gene cluster. The sequence is that of Prenyltransferase nscD from Trichophyton equinum (strain ATCC MYA-4606 / CBS 127.97) (Horse ringworm fungus).